The following is a 155-amino-acid chain: F-box only protein 48 (155 aa).

The tract at residues 1-27 (MHKNSKRNNNLRVSHTEANSVDAEKEK) is disordered. The span at 7-19 (RNNNLRVSHTEAN) shows a compositional bias: polar residues. Positions 32–79 (NNFFELLPAEITFKIFSQLDIRSLCRASLTCRSWNDTIRNSDSLWKPH) constitute an F-box domain.

This chain is F-box only protein 48 (FBXO48), found in Homo sapiens (Human).